A 204-amino-acid chain; its full sequence is Holliday junction branch migration complex subunit RuvA (204 aa).

The segment at 1-64 (MIGKLKGTID…EDQLKLFGFM (64 aa)) is domain I. Residues 65 to 143 (TALEREWFNL…AYAGEAINIA (79 aa)) are domain II. The segment at 144-151 (LKRELGEG) is flexible linker. The interval 152–204 (VAAAPVADAVSALTNLGYSRDQAANAVAAAMKTAGEGADSAKLIRLGLKELAR) is domain III.

It belongs to the RuvA family. As to quaternary structure, homotetramer. Forms an RuvA(8)-RuvB(12)-Holliday junction (HJ) complex. HJ DNA is sandwiched between 2 RuvA tetramers; dsDNA enters through RuvA and exits via RuvB. An RuvB hexamer assembles on each DNA strand where it exits the tetramer. Each RuvB hexamer is contacted by two RuvA subunits (via domain III) on 2 adjacent RuvB subunits; this complex drives branch migration. In the full resolvosome a probable DNA-RuvA(4)-RuvB(12)-RuvC(2) complex forms which resolves the HJ.

It localises to the cytoplasm. In terms of biological role, the RuvA-RuvB-RuvC complex processes Holliday junction (HJ) DNA during genetic recombination and DNA repair, while the RuvA-RuvB complex plays an important role in the rescue of blocked DNA replication forks via replication fork reversal (RFR). RuvA specifically binds to HJ cruciform DNA, conferring on it an open structure. The RuvB hexamer acts as an ATP-dependent pump, pulling dsDNA into and through the RuvAB complex. HJ branch migration allows RuvC to scan DNA until it finds its consensus sequence, where it cleaves and resolves the cruciform DNA. In Rhizobium etli (strain ATCC 51251 / DSM 11541 / JCM 21823 / NBRC 15573 / CFN 42), this protein is Holliday junction branch migration complex subunit RuvA.